The chain runs to 543 residues: Oxalate--CoA ligase (543 aa).

Residue 196-207 coordinates ATP; sequence HTSGTTSTPKTV. Positions 410-458 match the FACS motif; that stretch reads ENYFRTGDQGYFDPEGFLVLTGRIKELINRGGEKISPIELDGIMLSHPK. A C-terminal peroxisome targeting signal (PTS1) motif is present at residues 541 to 543; that stretch reads SKL.

This sequence belongs to the ATP-dependent AMP-binding enzyme family. In terms of assembly, interacts with PEX5.

It localises to the peroxisome matrix. The protein resides in the peroxisome membrane. It catalyses the reaction oxalate + ATP + CoA = oxalyl-CoA + AMP + diphosphate. In terms of biological role, catalyzes the first step in a degradation pathway of oxalate to CO(2) to protect the cell against the harmful effects of oxalate derived from endogenous processes or an environmental sources. The polypeptide is Oxalate--CoA ligase (Saccharomyces cerevisiae (strain ATCC 204508 / S288c) (Baker's yeast)).